A 424-amino-acid chain; its full sequence is Zinc metalloproteinase-disintegrin-like brevilysin H2a (424 aa).

Residue Q1 is modified to Pyrrolidone carboxylic acid. The Peptidase M12B domain occupies 9–207 (RYVKLAIVAD…YKPQCILNEP (199 aa)). N-linked (GlcNAc...) asparagine glycosylation is present at N69. D96 contacts Ca(2+). 3 cysteine pairs are disulfide-bonded: C120-C202, C164-C186, and C166-C169. H145 lines the Zn(2+) pocket. Residue E146 is part of the active site. Residues H149 and H155 each contribute to the Zn(2+) site. N185 carries N-linked (GlcNAc...) asparagine glycosylation. Residues C202, N205, V217, N220, L222, E224, E227, and D230 each contribute to the Ca(2+) site. Residues 215–301 (PPVCGNELLE…DCPTDDLQRN (87 aa)) enclose the Disintegrin domain. Cystine bridges form between C218/C247, C229/C242, C231/C237, C241/C264, C255/C261, C260/C286, C273/C293, C280/C312, C305/C317, C324/C374, C339/C385, C352/C362, C369/C411, and C405/C417. The short motif at 279-281 (DCD) is the D/ECD-tripeptide element. Residues D281, E284, and D296 each coordinate Ca(2+). A glycan (N-linked (GlcNAc...) asparagine) is linked at N331.

This sequence belongs to the venom metalloproteinase (M12B) family. P-III subfamily. P-IIIa sub-subfamily. Monomer. Requires Zn(2+) as cofactor. Post-translationally, glycosylated. Expressed by the venom gland.

The protein localises to the secreted. Its proteolytic activity is inhibited by EDTA, TPEN, 1,10-phenanthroline, and some thiol compounds, but is enhanced by alkaline earth metal ions (Mg2+, Ca2+, Sr2+, and Ba2+). Its activity is not modulated by urea (4 M). Functionally, non-hemorrhagic metalloproteinase that degrades fibrinogen. The alpha chain (FGA) is rapidly degraded, the beta chain (FGB) is degraded very slowly, while the gamma chain is left intact. Shows a prefential cleavage at X-Leu bonds. Cleaves insulin B chain at '29-His-|-Leu-30', '33-Ser-|-His-34', '38-Ala-|-Leu-39' and '40-Tyr-|-Leu-41' bonds. This chain is Zinc metalloproteinase-disintegrin-like brevilysin H2a, found in Gloydius brevicauda (Korean slamosa snake).